The sequence spans 321 residues: Homoserine kinase (321 aa).

This sequence belongs to the pseudomonas-type ThrB family.

It carries out the reaction L-homoserine + ATP = O-phospho-L-homoserine + ADP + H(+). It participates in amino-acid biosynthesis; L-threonine biosynthesis; L-threonine from L-aspartate: step 4/5. The protein is Homoserine kinase of Azorhizobium caulinodans (strain ATCC 43989 / DSM 5975 / JCM 20966 / LMG 6465 / NBRC 14845 / NCIMB 13405 / ORS 571).